The following is a 147-amino-acid chain: Ubiquitin-conjugating enzyme E2-16 kDa (147 aa).

The UBC core domain occupies 1–147 (MAFKRINKEL…AREWTRKYAI (147 aa)). Cys107 serves as the catalytic Glycyl thioester intermediate.

The protein belongs to the ubiquitin-conjugating enzyme family.

The catalysed reaction is S-ubiquitinyl-[E1 ubiquitin-activating enzyme]-L-cysteine + [E2 ubiquitin-conjugating enzyme]-L-cysteine = [E1 ubiquitin-activating enzyme]-L-cysteine + S-ubiquitinyl-[E2 ubiquitin-conjugating enzyme]-L-cysteine.. It participates in protein modification; protein ubiquitination. Catalyzes the covalent attachment of ubiquitin to other proteins. May also mediate selective proteolysis pathways. This is Ubiquitin-conjugating enzyme E2-16 kDa (UBC1) from Colletotrichum gloeosporioides (Anthracnose fungus).